The following is a 760-amino-acid chain: Elongation factor G, mitochondrial (760 aa).

The N-terminal 37 residues, 1–37 (MIRGMLPRGLRALRPSVSPTVVSSSLHRNFHSSIRRF), are a transit peptide targeting the mitochondrion. The tr-type G domain maps to 68–349 (SRLRNIGVSA…AVVDYLPQPN (282 aa)). GTP is bound by residues 77 to 84 (AHIDSGKT), 148 to 152 (DTPGH), and 202 to 205 (NKMD).

It belongs to the TRAFAC class translation factor GTPase superfamily. Classic translation factor GTPase family. EF-G/EF-2 subfamily.

It localises to the mitochondrion. The protein operates within protein biosynthesis; polypeptide chain elongation. Functionally, mitochondrial GTPase that catalyzes the GTP-dependent ribosomal translocation step during translation elongation. During this step, the ribosome changes from the pre-translocational (PRE) to the post-translocational (POST) state as the newly formed A-site-bound peptidyl-tRNA and P-site-bound deacylated tRNA move to the P and E sites, respectively. Catalyzes the coordinated movement of the two tRNA molecules, the mRNA and conformational changes in the ribosome. The protein is Elongation factor G, mitochondrial of Meyerozyma guilliermondii (strain ATCC 6260 / CBS 566 / DSM 6381 / JCM 1539 / NBRC 10279 / NRRL Y-324) (Yeast).